Reading from the N-terminus, the 358-residue chain is Flap endonuclease 1 (358 aa).

The N-domain stretch occupies residues methionine 1–arginine 103. Residue aspartate 34 participates in Mg(2+) binding. The DNA site is built by arginine 47 and arginine 69. Aspartate 85, glutamate 157, glutamate 159, aspartate 178, and aspartate 180 together coordinate Mg(2+). Positions leucine 121–tyrosine 252 are I-domain. Glutamate 157 contacts DNA. The DNA site is built by glycine 230 and aspartate 232. A Mg(2+)-binding site is contributed by aspartate 232. The tract at residues lysine 346–phenylalanine 354 is interaction with PCNA.

This sequence belongs to the XPG/RAD2 endonuclease family. FEN1 subfamily. As to quaternary structure, interacts with PCNA. Three molecules of FEN1 bind to one PCNA trimer with each molecule binding to one PCNA monomer. PCNA stimulates the nuclease activity without altering cleavage specificity. The cofactor is Mg(2+). Phosphorylated. Phosphorylation upon DNA damage induces relocalization to the nuclear plasma.

It is found in the nucleus. The protein resides in the nucleolus. Its subcellular location is the nucleoplasm. It localises to the mitochondrion. In terms of biological role, structure-specific nuclease with 5'-flap endonuclease and 5'-3' exonuclease activities involved in DNA replication and repair. During DNA replication, cleaves the 5'-overhanging flap structure that is generated by displacement synthesis when DNA polymerase encounters the 5'-end of a downstream Okazaki fragment. It enters the flap from the 5'-end and then tracks to cleave the flap base, leaving a nick for ligation. Also involved in the long patch base excision repair (LP-BER) pathway, by cleaving within the apurinic/apyrimidinic (AP) site-terminated flap. Acts as a genome stabilization factor that prevents flaps from equilibrating into structures that lead to duplications and deletions. Also possesses 5'-3' exonuclease activity on nicked or gapped double-stranded DNA, and exhibits RNase H activity. Also involved in replication and repair of rDNA and in repairing mitochondrial DNA. The sequence is that of Flap endonuclease 1 from Enterocytozoon bieneusi (strain H348) (Microsporidian parasite).